The chain runs to 154 residues: Transcriptional repressor NrdR (154 aa).

A zinc finger lies at C3–C34. The ATP-cone domain occupies P49 to E139.

It belongs to the NrdR family. Requires Zn(2+) as cofactor.

In terms of biological role, negatively regulates transcription of bacterial ribonucleotide reductase nrd genes and operons by binding to NrdR-boxes. This Ralstonia pickettii (strain 12J) protein is Transcriptional repressor NrdR.